Here is a 133-residue protein sequence, read N- to C-terminus: p53 and DNA damage-regulated protein 1 (133 aa).

Belongs to the prefoldin subunit beta family. As to quaternary structure, component of the PAQosome complex which is responsible for the biogenesis of several protein complexes and which consists of R2TP complex members RUVBL1, RUVBL2, RPAP3 and PIH1D1, URI complex members PFDN2, PFDN6, PDRG1, UXT and URI1 as well as ASDURF, POLR2E and DNAAF10/WDR92.

Its subcellular location is the cytoplasm. Its function is as follows. May play a role in chaperone-mediated protein folding. This chain is p53 and DNA damage-regulated protein 1 (Pdrg1), found in Rattus norvegicus (Rat).